Reading from the N-terminus, the 101-residue chain is Small ribosomal subunit protein bS6 (101 aa).

It belongs to the bacterial ribosomal protein bS6 family. Part of the 30S ribosomal subunit. Forms a tight heterodimer with protein bS18.

Located on the outer edge of the platform on the body of the 30S subunit. This is Small ribosomal subunit protein bS6 (rpsF) from Thermus thermophilus (strain ATCC BAA-163 / DSM 7039 / HB27).